We begin with the raw amino-acid sequence, 570 residues long: Proline--tRNA ligase (570 aa).

This sequence belongs to the class-II aminoacyl-tRNA synthetase family. ProS type 1 subfamily. As to quaternary structure, homodimer.

The protein resides in the cytoplasm. It catalyses the reaction tRNA(Pro) + L-proline + ATP = L-prolyl-tRNA(Pro) + AMP + diphosphate. Functionally, catalyzes the attachment of proline to tRNA(Pro) in a two-step reaction: proline is first activated by ATP to form Pro-AMP and then transferred to the acceptor end of tRNA(Pro). As ProRS can inadvertently accommodate and process non-cognate amino acids such as alanine and cysteine, to avoid such errors it has two additional distinct editing activities against alanine. One activity is designated as 'pretransfer' editing and involves the tRNA(Pro)-independent hydrolysis of activated Ala-AMP. The other activity is designated 'posttransfer' editing and involves deacylation of mischarged Ala-tRNA(Pro). The misacylated Cys-tRNA(Pro) is not edited by ProRS. This is Proline--tRNA ligase from Shewanella sp. (strain MR-4).